The sequence spans 364 residues: DNA polymerase IV (364 aa).

Residues isoleucine 14–glycine 198 form the UmuC domain. Mg(2+) is bound by residues aspartate 18 and aspartate 116. Residue glutamate 117 is part of the active site.

It belongs to the DNA polymerase type-Y family. Monomer. It depends on Mg(2+) as a cofactor.

The protein localises to the cytoplasm. It catalyses the reaction DNA(n) + a 2'-deoxyribonucleoside 5'-triphosphate = DNA(n+1) + diphosphate. Its function is as follows. Poorly processive, error-prone DNA polymerase involved in untargeted mutagenesis. Copies undamaged DNA at stalled replication forks, which arise in vivo from mismatched or misaligned primer ends. These misaligned primers can be extended by PolIV. Exhibits no 3'-5' exonuclease (proofreading) activity. May be involved in translesional synthesis, in conjunction with the beta clamp from PolIII. The polypeptide is DNA polymerase IV (Streptococcus pyogenes serotype M4 (strain MGAS10750)).